Consider the following 115-residue polypeptide: Large ribosomal subunit protein uL22 (115 aa).

Belongs to the universal ribosomal protein uL22 family. Part of the 50S ribosomal subunit.

In terms of biological role, this protein binds specifically to 23S rRNA; its binding is stimulated by other ribosomal proteins, e.g. L4, L17, and L20. It is important during the early stages of 50S assembly. It makes multiple contacts with different domains of the 23S rRNA in the assembled 50S subunit and ribosome. Functionally, the globular domain of the protein is located near the polypeptide exit tunnel on the outside of the subunit, while an extended beta-hairpin is found that lines the wall of the exit tunnel in the center of the 70S ribosome. The sequence is that of Large ribosomal subunit protein uL22 from Endomicrobium trichonymphae.